A 423-amino-acid chain; its full sequence is UDP-N-acetylglucosamine 1-carboxyvinyltransferase 2 (423 aa).

Residue 23–24 coordinates phosphoenolpyruvate; it reads KN. Residue Arg96 participates in UDP-N-acetyl-alpha-D-glucosamine binding. Cys120 functions as the Proton donor in the catalytic mechanism. Position 120 is a 2-(S-cysteinyl)pyruvic acid O-phosphothioketal (Cys120). UDP-N-acetyl-alpha-D-glucosamine contacts are provided by residues 125-129, Asp309, and Val331; that span reads RPIDL.

The protein belongs to the EPSP synthase family. MurA subfamily.

It localises to the cytoplasm. The enzyme catalyses phosphoenolpyruvate + UDP-N-acetyl-alpha-D-glucosamine = UDP-N-acetyl-3-O-(1-carboxyvinyl)-alpha-D-glucosamine + phosphate. It participates in cell wall biogenesis; peptidoglycan biosynthesis. In terms of biological role, cell wall formation. Adds enolpyruvyl to UDP-N-acetylglucosamine. The chain is UDP-N-acetylglucosamine 1-carboxyvinyltransferase 2 from Streptococcus agalactiae serotype Ia (strain ATCC 27591 / A909 / CDC SS700).